The primary structure comprises 179 residues: Insulin-like growth factor 2 (179 aa).

The first 24 residues, 1–24 (MGITAGKSVLVLLAFLAFASCCYA), serve as a signal peptide directing secretion. Positions 25–52 (AYRPSETLCGGELVDTLQFVCGDRGFYF) are b. 3 disulfides stabilise this stretch: C33–C71, C45–C84, and C70–C75. The tract at residues 53–64 (SRPSSRINRRSR) is c. An a region spans residues 65–85 (GIVEECCFRSCDLALLETYCA). The segment at 86-91 (TPAKSE) is d. The propeptide at 92-179 (RDVSASTTVL…GGASSKASSD (88 aa)) is e peptide. O-linked (GalNAc...) threonine glycosylation is present at T106. S154 carries O-linked (GalNAc...) serine glycosylation. The interval 160–179 (ALPTQDPATHGGASSKASSD) is disordered. T163 carries O-linked (GalNAc...) threonine glycosylation.

This sequence belongs to the insulin family. Interacts with MYORG; this interaction is required for IGF2 secretion. Interacts with integrins ITGAV:ITGB3 and ITGA6:ITGB4; integrin-binding is required for IGF2 signaling. Interacts with IGFBP2. In terms of processing, proteolytically processed by PCSK4, proIGF2 is cleaved at Arg-128 and Arg-92 to generate big-IGF2 and mature IGF2.

It is found in the secreted. Its function is as follows. The insulin-like growth factors possess growth-promoting activity. Major fetal growth hormone in mammals. Plays a key role in regulating fetoplacental development. IGF2 is influenced by placental lactogen. Also involved in tissue differentiation. In adults, involved in glucose metabolism in adipose tissue, skeletal muscle and liver. Acts as a ligand for integrin which is required for IGF2 signaling. Positively regulates myogenic transcription factor MYOD1 function by facilitating the recruitment of transcriptional coactivators, thereby controlling muscle terminal differentiation. Inhibits myoblast differentiation and modulates metabolism via increasing the mitochondrial respiration rate. In terms of biological role, preptin undergoes glucose-mediated co-secretion with insulin, and acts as a physiological amplifier of glucose-mediated insulin secretion. Exhibits osteogenic properties by increasing osteoblast mitogenic activity through phosphoactivation of MAPK1 and MAPK3. This is Insulin-like growth factor 2 from Bos taurus (Bovine).